The chain runs to 466 residues: 3-isopropylmalate dehydratase large subunit (466 aa).

Cys347, Cys407, and Cys410 together coordinate [4Fe-4S] cluster.

Belongs to the aconitase/IPM isomerase family. LeuC type 1 subfamily. Heterodimer of LeuC and LeuD. [4Fe-4S] cluster serves as cofactor.

The catalysed reaction is (2R,3S)-3-isopropylmalate = (2S)-2-isopropylmalate. It functions in the pathway amino-acid biosynthesis; L-leucine biosynthesis; L-leucine from 3-methyl-2-oxobutanoate: step 2/4. In terms of biological role, catalyzes the isomerization between 2-isopropylmalate and 3-isopropylmalate, via the formation of 2-isopropylmaleate. This chain is 3-isopropylmalate dehydratase large subunit, found in Escherichia coli O45:K1 (strain S88 / ExPEC).